A 395-amino-acid polypeptide reads, in one-letter code: Nuclear hormone receptor family member nhr-10 (395 aa).

The nuclear receptor DNA-binding region spans 15–90 (EEVCLVCSDI…VGMDRNAIQQ (76 aa)). NR C4-type zinc fingers lie at residues 18–38 (CLVC…CNGC) and 54–78 (CQFQ…FEKC). The NR LBD domain maps to 152-392 (PSRTLIEAVV…TFAKQLLFGI (241 aa)).

It belongs to the nuclear hormone receptor family.

It is found in the nucleus. In terms of biological role, probable transcription factor that acts in a feed-forward loop with nhr-68 to activate genes involved in the vitamin B12-independent breakdown of the short-chain fatty acid propionate. This pathway is triggered in response to a diet low in vitamin B12, when canonical vitamin B12-dependent propionate breakdown cannot function; the resulting accumulation of propionate is probably sensed by nhr-10 and/or nhr-68. This is Nuclear hormone receptor family member nhr-10 (nhr-10) from Caenorhabditis elegans.